We begin with the raw amino-acid sequence, 875 residues long: GATOR2 complex protein MIOS (875 aa).

WD repeat units lie at residues 58–100, 111–155, 182–221, 223–261, 265–306, 320–360, and 395–437; these read SDTP…NSKF, KHAR…TPDI, GQND…QKMF, NTKA…KPVL, EQPK…TPIG, PCDN…SLAW, and RLRA…KQYT. The C4-type zinc finger occupies 735 to 781; that stretch reads VSCNFCGKSISYSCSSVPHQGRGFSQYGVSGSPTKSKVTSCPGCRKP. Zn(2+) contacts are provided by Cys737 and Cys740. Residues Ser759 and Ser766 each carry the phosphoserine modification. 11 residues coordinate Zn(2+): Cys775, Cys778, Cys788, Cys827, Cys830, His832, His835, His838, Cys849, Cys854, and Cys858. Residues 782 to 863 form an RING-type; atypical zinc finger; the sequence is LPRCALCLIN…CTCKCMQLDT (82 aa).

The protein belongs to the WD repeat mio family. As to quaternary structure, component of the GATOR2 subcomplex, composed of MIOS, SEC13, SEH1L, WDR24 and WDR59. The GATOR2 complex interacts with CASTOR1 and CASTOR2; the interaction is negatively regulated by arginine. CASTOR1 and CASTOR2 convey leucine availability via direct interaction with MIOS. The GATOR2 complex interacts with SESN1, SESN2 and SESN3; the interaction is negatively regulated by amino acids. Interacts with SAR1A and SAR1B; the interaction is direct, disrupted by leucine and mediates the interaction of SAR1A or SAR1B with the GATOR2 complex to negatively regulate the TORC1 signaling upon leucine deprivation. As to expression, widely expressed. In brain, expressed in neurons and glia (oligodendrocytes and astrocytes), with more abundance in neurons.

It is found in the lysosome membrane. Its activity is regulated as follows. The GATOR2 complex is negatively regulated by the upstream amino acid sensors CASTOR1 and SESN2, which sequester the GATOR2 complex in absence of amino acids. In the presence of abundant amino acids, GATOR2 is released from CASTOR1 and SESN2 and activated. As a component of the GATOR2 complex, functions as an activator of the amino acid-sensing branch of the mTORC1 signaling pathway. The GATOR2 complex indirectly activates mTORC1 through the inhibition of the GATOR1 subcomplex. GATOR2 probably acts as an E3 ubiquitin-protein ligase toward GATOR1. In the presence of abundant amino acids, the GATOR2 complex mediates ubiquitination of the NPRL2 core component of the GATOR1 complex, leading to GATOR1 inactivation. In the absence of amino acids, GATOR2 is inhibited, activating the GATOR1 complex. Within the GATOR2 complex, MIOS is required to prevent autoubiquitination of WDR24, the catalytic subunit of the complex. The GATOR2 complex is required for brain myelination. The protein is GATOR2 complex protein MIOS of Mus musculus (Mouse).